Here is a 100-residue protein sequence, read N- to C-terminus: Movement protein TGBp3 (100 aa).

The Lumenal segment spans residues 1 to 41 (MQTAPREYSTSGPTAVLAPTTNTQHYAPYSLYRFLSSHKLD). Residues 42–59 (LLLGIALLVFLYVITAAP) traverse the membrane as a helical segment. Residues 60 to 100 (KEVCQVVITGESVVIRNCQQPDRILANLNLSPWNGVKFPLL) are Cytoplasmic-facing.

The protein belongs to the Tymovirales TGBp3 protein family.

It is found in the host endoplasmic reticulum membrane. Its function is as follows. Plays a role in viral cell-to-cell propagation, by facilitating genome transport to neighboring plant cells through plasmosdesmata. May induce the formation of granular vesicles derived from the Endoplasmic reticulum, which align on actin filaments. This Narcissus mosaic virus (NMV) protein is Movement protein TGBp3.